The chain runs to 249 residues: V-type proton ATPase subunit D 2 (249 aa).

It belongs to the V-ATPase D subunit family. V-ATPase is a heteromultimeric enzyme made up of two complexes: the ATP-hydrolytic V1 complex and the proton translocation V0 complex. The V1 complex consists of three catalytic AB heterodimers that form a heterohexamer, three peripheral stalks each consisting of EG heterodimers, one central rotor including subunits D and F, and the regulatory subunits C and H. The proton translocation complex V0 consists of the proton transport subunit a, a ring of proteolipid subunits c9c'', rotary subunit d, subunits e and f, and the accessory subunits VhaAC45 and ATP6AP2.

Its function is as follows. Subunit of the V1 complex of vacuolar(H+)-ATPase (V-ATPase), a multisubunit enzyme composed of a peripheral complex (V1) that hydrolyzes ATP and a membrane integral complex (V0) that translocates protons. V-ATPase is responsible for acidifying and maintaining the pH of intracellular compartments and in some cell types, is targeted to the plasma membrane, where it is responsible for acidifying the extracellular environment. This chain is V-type proton ATPase subunit D 2 (Vha36-3), found in Drosophila melanogaster (Fruit fly).